The chain runs to 1342 residues: DNA-directed RNA polymerase subunit beta (1342 aa).

Belongs to the RNA polymerase beta chain family. The RNAP catalytic core consists of 2 alpha, 1 beta, 1 beta' and 1 omega subunit. When a sigma factor is associated with the core the holoenzyme is formed, which can initiate transcription.

The enzyme catalyses RNA(n) + a ribonucleoside 5'-triphosphate = RNA(n+1) + diphosphate. In terms of biological role, DNA-dependent RNA polymerase catalyzes the transcription of DNA into RNA using the four ribonucleoside triphosphates as substrates. The chain is DNA-directed RNA polymerase subunit beta from Wigglesworthia glossinidia brevipalpis.